A 301-amino-acid polypeptide reads, in one-letter code: DSC E3 ubiquitin ligase complex subunit B (301 aa).

3 consecutive transmembrane segments (helical) span residues 9–29 (APITKLLLIYTIASSIALSIL), 52–72 (LATWQLAGFTNSTEALFAAML), and 90–110 (TFIISTLPYTSLLPPLLLVLL). Residues 268 to 284 (AAAAASGNAGSASEASG) are compositionally biased toward low complexity. Residues 268–301 (AAAAASGNAGSASEASGQRQRRREGGIMDRLRAL) are disordered. Over residues 290 to 301 (REGGIMDRLRAL) the composition is skewed to basic and acidic residues.

In terms of assembly, component of the DSC E3 ubiquitin ligase complex composed of dscA, dscB, dscC and dscD.

It is found in the endoplasmic reticulum membrane. The enzyme catalyses S-ubiquitinyl-[E2 ubiquitin-conjugating enzyme]-L-cysteine + [acceptor protein]-L-lysine = [E2 ubiquitin-conjugating enzyme]-L-cysteine + N(6)-ubiquitinyl-[acceptor protein]-L-lysine.. It functions in the pathway protein modification; protein ubiquitination. Its function is as follows. Component of the DSC E3 ubiquitin ligase complex which is required for the srbA transcriptional activator proteolytic cleavage to release the soluble transcription factor from the membrane in low oxygen or sterol conditions. Required for growth during hypoxia and triazole drug susceptibility, as well as for virulence in a murine model of invasive pulmonary aspergillosis (IPA). The polypeptide is DSC E3 ubiquitin ligase complex subunit B (Aspergillus fumigatus (strain ATCC MYA-4609 / CBS 101355 / FGSC A1100 / Af293) (Neosartorya fumigata)).